Consider the following 545-residue polypeptide: GPI transamidase component PIG-T homolog (545 aa).

An N-terminal signal peptide occupies residues 1–22; that stretch reads MKKNGCLLLFAYSLLSFSLTAA. The Lumenal portion of the chain corresponds to 23–493; sequence TIDETYDESL…PTPDFSMPYN (471 aa). N-linked (GlcNAc...) asparagine glycosylation is found at asparagine 168, asparagine 227, asparagine 336, asparagine 391, and asparagine 467. A helical transmembrane segment spans residues 494 to 514; that stretch reads VIIFTSTVIALTFGGIFNLLT. The Cytoplasmic portion of the chain corresponds to 515–545; it reads RRFVPQQSKFQNRQPSMLQRLKEKIFHKKRG.

It belongs to the PIGT family. As to quaternary structure, forms a complex with PIG-S homolog, PIG-U homolog and GPI8. Post-translationally, the disulfide bond between PIGK/GPI8 and PIGT is important for normal enzyme activity.

Its subcellular location is the endoplasmic reticulum membrane. It participates in glycolipid biosynthesis; glycosylphosphatidylinositol-anchor biosynthesis. In terms of biological role, component of the GPI transamidase complex. Involved in transfer of GPI to proteins. In Schizosaccharomyces pombe (strain 972 / ATCC 24843) (Fission yeast), this protein is GPI transamidase component PIG-T homolog (gpi16).